We begin with the raw amino-acid sequence, 513 residues long: MAEQVTLSRTQVCGILREELYQNDAFHQADTHIFIIMGASGDLAKKKIYPTIWWLFRDGLLPKETFIVGYARSQLTVDDIQKQSEPFFKATPEERPKLEEFFTRNSYVVGQYDDPASYKHLNSYINALHQGMQANHLFYLALPPTVYEAVTKNIQETCMSQTGFNRIIVEKPFGRDLQSSNQLSNHISSLFREDQIYRIDHYLDKEMVQNLMVLRFANRIFGPIWNGDNIVCVILTFKEPFGTEGRGGYFDEFGIIRDVMQSHLLQMLCLVAMEKPATTDSDDVRNEKVKVLKCISEVETDNVILGQYVGNPNGEGEAANGYLDDPTVPRGSTTATFAAAVLYVKNERWDGVPFILRCGKALNERKAEVRLQFRDIPGDIFHQKCKRNELVIRMQPNEAVYTTMMTKKPGMFFNPEESELDLTYGNKYKNVKLPGAYERLILDVFCGCQMHFVRTDELREGWRIFTPLLHKIEREKPQPFPYVYGSRGPTEADELMRRVGFQYKGTYKGTHKH.

N-acetylalanine is present on Ala2. A Phosphoserine modification is found at Ser8. Position 10 is a phosphothreonine (Thr10). Residues 38–45 (GASGDLAK) and Arg72 each bind NADP(+). Lys89 is subject to N6-acetyllysine. The NADP(+) site is built by Tyr147 and Lys171. D-glucose 6-phosphate is bound by residues Lys171, 201–205 (HYLDK), Glu239, and Asp258. Lys171 carries the N6-(2-hydroxyisobutyryl)lysine; alternate modification. Lys171 carries the post-translational modification N6-acetyllysine; alternate. Residue His263 is the Proton acceptor of the active site. Arg357 is an NADP(+) binding site. 2 residues coordinate D-glucose 6-phosphate: Lys360 and Arg365. The NADP(+) site is built by Lys366, Arg370, and Arg393. Gln395 lines the D-glucose 6-phosphate pocket. 421 to 423 (DLT) contributes to the NADP(+) binding site. Lys432 is modified (N6-acetyllysine). NADP(+) is bound by residues Arg487 and Tyr503. Tyr503 carries the post-translational modification Phosphotyrosine.

It belongs to the glucose-6-phosphate dehydrogenase family. As to quaternary structure, homotetramer; dimer of dimers. Interacts with SIRT2; the interaction is enhanced by H(2)O(2) treatment. In terms of processing, acetylated by ELP3; acetylation inhibits its homodimerization and enzyme activity. Deacetylated by SIRT2; deacetylation stimulates its enzyme activity. As to expression, testis.

It localises to the cytoplasm. Its subcellular location is the cytosol. The protein localises to the membrane. The enzyme catalyses D-glucose 6-phosphate + NADP(+) = 6-phospho-D-glucono-1,5-lactone + NADPH + H(+). Its pathway is carbohydrate degradation; pentose phosphate pathway; D-ribulose 5-phosphate from D-glucose 6-phosphate (oxidative stage): step 1/3. In terms of biological role, catalyzes the rate-limiting step of the oxidative pentose-phosphate pathway, which represents a route for the dissimilation of carbohydrates besides glycolysis. The main function of this enzyme is to provide reducing power (NADPH) and pentose phosphates for fatty acid and nucleic acid synthesis. The sequence is that of Glucose-6-phosphate 1-dehydrogenase 2 (G6pd2) from Mus musculus (Mouse).